A 365-amino-acid chain; its full sequence is Solute carrier family 35 member G1 (365 aa).

A disordered region spans residues methionine 1–alanine 33. Residues alanine 23–alanine 33 are compositionally biased toward low complexity. Helical transmembrane passes span glycine 69 to valine 89, alanine 97 to isoleucine 117, isoleucine 131 to tyrosine 151, leucine 156 to isoleucine 176, alanine 187 to phenylalanine 207, leucine 222 to leucine 242, phenylalanine 252 to valine 272, leucine 286 to leucine 306, alanine 311 to phenylalanine 333, and threonine 338 to isoleucine 357. EamA domains follow at residues phenylalanine 80 to arginine 202 and valine 233 to isoleucine 357.

This sequence belongs to the TMEM20 family. Interacts with STIM1; stimulated by depletion of intracellular calcium. Interacts with ORAI1. Interacts with the plasma membrane calcium-transporting ATPases ATP2B1 and ATP2B4. Interacts with ATP1A1, ATP2A2, KPNB1 and XPO1. In terms of tissue distribution, ubiquitously expressed.

The protein resides in the cell membrane. Its subcellular location is the endoplasmic reticulum membrane. Its function is as follows. May play a role in intracellular calcium sensing and homeostasis. May act as a negative regulator of plasma membrane calcium-transporting ATPases preventing calcium efflux from the cell. This Homo sapiens (Human) protein is Solute carrier family 35 member G1 (SLC35G1).